The chain runs to 890 residues: Wolframin (890 aa).

Met-1 bears the N-acetylmethionine mark. Residues Met-1 to Gln-20 show a composition bias toward pro residues. The segment at Met-1–Ala-83 is disordered. Positions Met-1–Thr-323 are interaction with ATP6V1A. Thr-30 bears the Phosphothreonine mark. Position 32 is a phosphoserine (Ser-32). Low complexity predominate over residues Pro-50–Pro-67. Residues Ser-71–Ala-83 are compositionally biased toward basic and acidic residues. Residue Ser-158 is modified to Phosphoserine. A disordered region spans residues Val-208–Gln-227. A run of 10 helical transmembrane segments spans residues Met-314–Ile-334, Ile-340–Val-360, Asn-402–Pro-422, Asp-427–Met-447, Val-465–Val-485, Gly-496–Leu-516, Thr-529–Ile-549, Ile-563–Gly-583, Arg-589–Pro-609, and Ser-632–Tyr-652. The Lumenal segment spans residues Val-653 to Ser-869. 2 N-linked (GlcNAc...) asparagine glycosylation sites follow: Asn-663 and Asn-748. The helical transmembrane segment at Thr-870–Ala-890 threads the bilayer.

As to quaternary structure, interacts with ATP6V1A. As to expression, highly expressed in the developing lens.

It is found in the endoplasmic reticulum membrane. The protein resides in the cytoplasmic vesicle. It localises to the secretory vesicle. Its function is as follows. Participates in the regulation of cellular Ca(2+) homeostasis, at least partly, by modulating the filling state of the endoplasmic reticulum Ca(2+) store. Negatively regulates the ER stress response and positively regulates the stability of V-ATPase subunits ATP6V1A and ATP1B1 by preventing their degradation through an unknown proteasome-independent mechanism. The chain is Wolframin (Wfs1) from Mus musculus (Mouse).